The chain runs to 77 residues: Chassatide C2 (77 aa).

The N-terminal stretch at 1-24 (MAKFANYLMLFLLVASLVMLEAQS) is a signal peptide. The propeptide at 25-44 (SDTIKVPDLGKRLLMNRDPN) is removed in mature form. The segment at residues 45–75 (GIPCAESCVWIPCTITALMGCSCKNNVCYNN) is a cross-link (cyclopeptide (Gly-Asn)). 3 cysteine pairs are disulfide-bonded: Cys-48-Cys-65, Cys-52-Cys-67, and Cys-57-Cys-72. Met-63 carries the methionine sulfoxide; in form chassatide chaC2A modification. The propeptide at 76 to 77 (EL) is removed in mature form.

The protein belongs to the cyclotide family. Bracelet subfamily. This is a cyclic peptide. Expressed in fruit, pedicel and stem but not in leaf and root (at protein level).

Chassatide C2: Probably participates in a plant defense mechanism. Has no activity against bacteria up to a concentration of 80 uM. Has cytotoxic but no hemolytic activity. Functionally, chassatide C2A: Probably participates in a plant defense mechanism. Has no activity against bacteria up to a concentration of 80 uM. Has no cytotoxic and no hemolytic activity. This Chassalia chartacea (Chassalia curviflora) protein is Chassatide C2.